Consider the following 129-residue polypeptide: 3-aminoacrylate deaminase RutC (129 aa).

This sequence belongs to the RutC family.

It carries out the reaction (Z)-3-aminoacrylate + H2O + H(+) = 3-oxopropanoate + NH4(+). Involved in pyrimidine catabolism. Catalyzes the deamination of 3-aminoacrylate to malonic semialdehyde, a reaction that can also occur spontaneously. RutC may facilitate the reaction and modulate the metabolic fitness, rather than catalyzing essential functions. The chain is 3-aminoacrylate deaminase RutC from Yersinia enterocolitica serotype O:8 / biotype 1B (strain NCTC 13174 / 8081).